The following is a 312-amino-acid chain: Acetyl-coenzyme A carboxylase carboxyl transferase subunit alpha (312 aa).

In terms of domain architecture, CoA carboxyltransferase C-terminal spans Arg-36–Thr-286.

The protein belongs to the AccA family. In terms of assembly, acetyl-CoA carboxylase is a heterohexamer composed of biotin carboxyl carrier protein (AccB), biotin carboxylase (AccC) and two subunits each of ACCase subunit alpha (AccA) and ACCase subunit beta (AccD).

It is found in the cytoplasm. It carries out the reaction N(6)-carboxybiotinyl-L-lysyl-[protein] + acetyl-CoA = N(6)-biotinyl-L-lysyl-[protein] + malonyl-CoA. The protein operates within lipid metabolism; malonyl-CoA biosynthesis; malonyl-CoA from acetyl-CoA: step 1/1. Functionally, component of the acetyl coenzyme A carboxylase (ACC) complex. First, biotin carboxylase catalyzes the carboxylation of biotin on its carrier protein (BCCP) and then the CO(2) group is transferred by the carboxyltransferase to acetyl-CoA to form malonyl-CoA. The sequence is that of Acetyl-coenzyme A carboxylase carboxyl transferase subunit alpha from Helicobacter pylori (strain HPAG1).